A 481-amino-acid polypeptide reads, in one-letter code: Tryptophan--tRNA ligase, cytoplasmic (481 aa).

A WHEP-TRS domain is found at 12–68; that stretch reads SPLELFNSIAAQGELVRSLKAGNAPKDEIESAVKMLLSLKMNYKTAMGEEYKAGCPP. A disordered region spans residues 65-85; sequence GCPPGNSTAGSNGDPDATKAS. At Lys-158 the chain carries N6-succinyllysine. The short motif at 168-177 is the 'HIGH' region element; the sequence is PSSEAMHLGH. The short motif at 353-357 is the 'KMSKS' region element; sequence KMSAS. Position 355 is a phosphoserine (Ser-355).

Belongs to the class-I aminoacyl-tRNA synthetase family. Homodimer. Interacts with oxidized form of GAPDH. In terms of processing, proteolytic cleavage generates 2 forms; T1-TrpRS and T2-TrpRS.

It is found in the cytoplasm. The catalysed reaction is tRNA(Trp) + L-tryptophan + ATP = L-tryptophyl-tRNA(Trp) + AMP + diphosphate + H(+). Functionally, catalyzes the attachment of tryptophan to tRNA(Trp) in a two-step reaction: tryptophan is first activated by ATP to form Trp-AMP and then transferred to the acceptor end of the tRNA(Trp). Could also possess an angiostatic activity. This is Tryptophan--tRNA ligase, cytoplasmic from Rattus norvegicus (Rat).